We begin with the raw amino-acid sequence, 411 residues long: Serine hydroxymethyltransferase (411 aa).

(6S)-5,6,7,8-tetrahydrofolate contacts are provided by residues leucine 119 and 123–125 (GHL). Lysine 228 is modified (N6-(pyridoxal phosphate)lysine).

The protein belongs to the SHMT family. Homodimer. Pyridoxal 5'-phosphate serves as cofactor.

The protein resides in the cytoplasm. The catalysed reaction is (6R)-5,10-methylene-5,6,7,8-tetrahydrofolate + glycine + H2O = (6S)-5,6,7,8-tetrahydrofolate + L-serine. It participates in one-carbon metabolism; tetrahydrofolate interconversion. It functions in the pathway amino-acid biosynthesis; glycine biosynthesis; glycine from L-serine: step 1/1. Its function is as follows. Catalyzes the reversible interconversion of serine and glycine with tetrahydrofolate (THF) serving as the one-carbon carrier. This reaction serves as the major source of one-carbon groups required for the biosynthesis of purines, thymidylate, methionine, and other important biomolecules. Also exhibits THF-independent aldolase activity toward beta-hydroxyamino acids, producing glycine and aldehydes, via a retro-aldol mechanism. The sequence is that of Serine hydroxymethyltransferase from Clostridium kluyveri (strain NBRC 12016).